The sequence spans 712 residues: BTB/POZ domain-containing protein 18 (712 aa).

Residues 34–102 (CDVLLQAEGE…LYTSEMEVSQ (69 aa)) enclose the BTB domain. Disordered stretches follow at residues 157 to 176 (VTPS…PCPL), 212 to 355 (RACP…EGQV), and 374 to 410 (ETPL…QEMS). The segment covering 218–228 (QEKNSSPSSHS) has biased composition (polar residues). Over residues 229–238 (QEPRENKNDT) the composition is skewed to basic and acidic residues. A compositionally biased stretch (low complexity) spans 277–288 (SKPSSILSGSSS). Positions 303–313 (VNKETPEDKPK) are enriched in basic and acidic residues. Positions 396 to 410 (PSGTQPFSSNEQEMS) are enriched in polar residues. Phosphoserine is present on residues serine 420, serine 671, and serine 672. Disordered regions lie at residues 653 to 676 (KAGK…EEEE) and 691 to 712 (TTVP…DILT). Over residues 702 to 712 (SESETEVDILT) the composition is skewed to acidic residues.

The protein resides in the nucleus. In terms of biological role, specifically required during spermatogenesis to promote expression of piRNA precursors. The piRNA metabolic process mediates the repression of transposable elements during meiosis by forming complexes composed of piRNAs and Piwi proteins and governs the methylation and subsequent repression of transposons, which is essential for the germline integrity. Acts by facilitating transcription elongation at piRNA loci during pachytene. This Homo sapiens (Human) protein is BTB/POZ domain-containing protein 18.